A 690-amino-acid polypeptide reads, in one-letter code: Glycine--tRNA ligase 1, mitochondrial (690 aa).

A mitochondrion-targeting transit peptide spans 1-24 (MSFFNISRRFYSQIVKKSVKIKRM). Serine 25 bears the N-acetylserine mark. Serine 226 bears the Phosphoserine mark. Glutamate 251 lines the glycine pocket. ATP-binding positions include 283–285 (RNE) and 294–295 (RV). Glycine is bound at residue glutamate 302. Position 410–411 (410–411 (EC)) interacts with ATP. Phosphoserine occurs at positions 476 and 528. 531 to 533 (EPS) serves as a coordination point for glycine. Arginine 538 serves as a coordination point for ATP. Threonine 689 is subject to Phosphothreonine.

The protein belongs to the class-II aminoacyl-tRNA synthetase family. Homodimer.

It is found in the cytoplasm. The protein localises to the mitochondrion matrix. It carries out the reaction tRNA(Gly) + glycine + ATP = glycyl-tRNA(Gly) + AMP + diphosphate. It catalyses the reaction 2 ATP + H(+) = P(1),P(4)-bis(5'-adenosyl) tetraphosphate + diphosphate. Its function is as follows. Catalyzes the ATP-dependent ligation of glycine to the 3'-end of its cognate tRNA, via the formation of an aminoacyl-adenylate intermediate (Gly-AMP). Also produces diadenosine tetraphosphate (Ap4A), a universal pleiotropic signaling molecule needed for cell regulation pathways, by direct condensation of 2 ATPs. Thereby, may play a special role in Ap4A homeostasis. The chain is Glycine--tRNA ligase 1, mitochondrial (GRS1) from Saccharomyces cerevisiae (strain ATCC 204508 / S288c) (Baker's yeast).